The chain runs to 342 residues: Dof zinc finger protein DOF4.6 (342 aa).

The disordered stretch occupies residues Asn21–Asn54. The span at Lys25–Pro36 shows a compositional bias: pro residues. Basic and acidic residues predominate over residues Gly41–Gln51. The Dof-type zinc-finger motif lies at Val53–Arg107. Zn(2+)-binding residues include Cys55, Cys58, Cys80, and Cys83. A disordered region spans residues Arg94–His136. Positions Ser110–Ser122 are enriched in low complexity. Residues Thr127–His136 are compositionally biased toward basic residues.

Accumulates in the stele.

Its subcellular location is the nucleus. Functionally, transcription factor that binds specifically to a 5'-AA[AG]G-3' consensus core sequence. In Arabidopsis thaliana (Mouse-ear cress), this protein is Dof zinc finger protein DOF4.6.